Reading from the N-terminus, the 225-residue chain is NAD(P)H-quinone oxidoreductase subunit K, chloroplastic (225 aa).

The [4Fe-4S] cluster site is built by cysteine 43, cysteine 44, cysteine 108, and cysteine 139.

It belongs to the complex I 20 kDa subunit family. NDH is composed of at least 16 different subunits, 5 of which are encoded in the nucleus. The cofactor is [4Fe-4S] cluster.

The protein localises to the plastid. It is found in the chloroplast thylakoid membrane. It catalyses the reaction a plastoquinone + NADH + (n+1) H(+)(in) = a plastoquinol + NAD(+) + n H(+)(out). It carries out the reaction a plastoquinone + NADPH + (n+1) H(+)(in) = a plastoquinol + NADP(+) + n H(+)(out). Functionally, NDH shuttles electrons from NAD(P)H:plastoquinone, via FMN and iron-sulfur (Fe-S) centers, to quinones in the photosynthetic chain and possibly in a chloroplast respiratory chain. The immediate electron acceptor for the enzyme in this species is believed to be plastoquinone. Couples the redox reaction to proton translocation, and thus conserves the redox energy in a proton gradient. This Populus alba (White poplar) protein is NAD(P)H-quinone oxidoreductase subunit K, chloroplastic.